Reading from the N-terminus, the 219-residue chain is Envelope protein US9 homolog (219 aa).

Over Met1–Thr193 the chain is Intravirion. A Di-leucine internalization motif motif is present at residues Leu145–Leu146. The tract at residues Asp153–Glu168 is acidic. A phosphoserine; by host CK2 mark is found at Ser163 and Ser165. The helical; Signal-anchor for type II membrane protein transmembrane segment at Val194 to Leu214 threads the bilayer. Residues Ala215 to Pro219 are Virion surface-facing.

Belongs to the alphaherpesvirinae envelope protein US9 family. Post-translationally, phosphorylated on serines within the acidic cluster. Phosphorylation determines whether endocytosed viral US9 traffics to the trans-Golgi network or recycles to the cell membrane.

It is found in the virion membrane. Its subcellular location is the host Golgi apparatus membrane. The protein localises to the host smooth endoplasmic reticulum membrane. The protein resides in the host cell membrane. Its function is as follows. Essential for the anterograde spread of the infection throughout the host nervous system. Together with the gE/gI heterodimer, US9 is involved in the sorting and transport of viral structural components toward axon tips. In Equine herpesvirus 1 (strain Kentucky A) (EHV-1), this protein is Envelope protein US9 homolog.